A 408-amino-acid chain; its full sequence is Multidrug resistance protein MdtG (408 aa).

The next 11 membrane-spanning stretches (helical) occupy residues 16-36 (LIVA…VMPF), 58-78 (IVFS…GGLA), 92-112 (LGMG…QFLI), 115-135 (ALLG…ATQV), 146-166 (TLST…GLLA), 173-193 (PVFF…LFCI), 224-244 (LFVT…ILTL), 256-276 (VAFI…LSAP), 290-310 (ILIT…YVQT), 319-339 (FLLG…LVYN), and 378-398 (AVFL…WNSL).

Belongs to the major facilitator superfamily. DHA1 family. MdtG (TC 2.A.1.2.20) subfamily.

The protein localises to the cell inner membrane. In terms of biological role, confers resistance to fosfomycin and deoxycholate. In Escherichia coli O81 (strain ED1a), this protein is Multidrug resistance protein MdtG.